Reading from the N-terminus, the 173-residue chain is Putative pre-16S rRNA nuclease (173 aa).

This sequence belongs to the YqgF nuclease family.

The protein resides in the cytoplasm. Its function is as follows. Could be a nuclease involved in processing of the 5'-end of pre-16S rRNA. In Rhodopirellula baltica (strain DSM 10527 / NCIMB 13988 / SH1), this protein is Putative pre-16S rRNA nuclease.